The primary structure comprises 461 residues: Fumarate hydratase class II (461 aa).

Residues 99–101 (SGT), 130–133 (HPND), 140–142 (STN), and Thr188 each bind substrate. The active-site Proton donor/acceptor is His189. Ser319 is a catalytic residue. Substrate is bound by residues Ser320 and 325 to 327 (KVN).

It belongs to the class-II fumarase/aspartase family. Fumarase subfamily. As to quaternary structure, homotetramer.

It localises to the cytoplasm. It catalyses the reaction (S)-malate = fumarate + H2O. The protein operates within carbohydrate metabolism; tricarboxylic acid cycle; (S)-malate from fumarate: step 1/1. Functionally, involved in the TCA cycle. Catalyzes the stereospecific interconversion of fumarate to L-malate. The sequence is that of Fumarate hydratase class II from Prochlorococcus marinus subsp. pastoris (strain CCMP1986 / NIES-2087 / MED4).